The primary structure comprises 418 residues: Glutamyl-tRNA reductase (418 aa).

Residues 49-52 (TCNR), serine 109, 114-116 (EPQ), and glutamine 120 each bind substrate. The Nucleophile role is filled by cysteine 50. 189-194 (GAGETI) lines the NADP(+) pocket.

The protein belongs to the glutamyl-tRNA reductase family. Homodimer.

It catalyses the reaction (S)-4-amino-5-oxopentanoate + tRNA(Glu) + NADP(+) = L-glutamyl-tRNA(Glu) + NADPH + H(+). It functions in the pathway porphyrin-containing compound metabolism; protoporphyrin-IX biosynthesis; 5-aminolevulinate from L-glutamyl-tRNA(Glu): step 1/2. Functionally, catalyzes the NADPH-dependent reduction of glutamyl-tRNA(Glu) to glutamate 1-semialdehyde (GSA). In Pectobacterium atrosepticum (strain SCRI 1043 / ATCC BAA-672) (Erwinia carotovora subsp. atroseptica), this protein is Glutamyl-tRNA reductase.